A 416-amino-acid chain; its full sequence is Putative cell agglutination protein SPAC1348.08c (416 aa).

Residues 1–27 (MNFFLYFRTIFLIQLYFFNYSTFGCSA) form the signal peptide. An N-linked (GlcNAc...) asparagine glycan is attached at asparagine 19. 2 tandem repeats follow at residues 90-124 (GTVT…EPTA) and 125-160 (GTVT…SPKN). The segment at 90 to 160 (GTVTETTISG…GTVEIVSPKN (71 aa)) is 2 X 36 AA approximate tandem repeats. Residues 224–390 (FNEPAYFGSS…GPLATTSYSY (167 aa)) form the PA14 domain. Asparagine 344 carries N-linked (GlcNAc...) asparagine glycosylation.

Its subcellular location is the cell surface. Its function is as follows. May be involved in agglutination during conjugation or other aspects of colony formation. This chain is Putative cell agglutination protein SPAC1348.08c, found in Schizosaccharomyces pombe (strain 972 / ATCC 24843) (Fission yeast).